We begin with the raw amino-acid sequence, 250 residues long: Cell division protein ZapD (250 aa).

Belongs to the ZapD family. Interacts with FtsZ.

Its subcellular location is the cytoplasm. Functionally, cell division factor that enhances FtsZ-ring assembly. Directly interacts with FtsZ and promotes bundling of FtsZ protofilaments, with a reduction in FtsZ GTPase activity. The chain is Cell division protein ZapD from Photorhabdus laumondii subsp. laumondii (strain DSM 15139 / CIP 105565 / TT01) (Photorhabdus luminescens subsp. laumondii).